Here is a 256-residue protein sequence, read N- to C-terminus: Leucine-rich repeat-containing protein 18 (256 aa).

8 LRR repeats span residues 28–49 (GRKR…ILRL), 51–72 (EIDE…ISKF), 74–95 (NLRW…IGQM), 97–118 (SLLF…VELN), 122–144 (NIRT…GALK), 145–167 (ELHE…SKLP), 168–189 (KLKK…DMFV), and 194–215 (RLEN…QKCQ).

It localises to the cytoplasm. In terms of biological role, may be involved in the regulation of spermatogenesis and sperm maturation. The protein is Leucine-rich repeat-containing protein 18 (Lrrc18) of Rattus norvegicus (Rat).